A 1109-amino-acid polypeptide reads, in one-letter code: Myosin ID heavy chain (1109 aa).

Positions 7-687 constitute a Myosin motor domain; the sequence is HGVDDMVMLS…TVFNLEELRE (681 aa). 101 to 108 lines the ATP pocket; sequence GESGAGKT. Positions 564–586 are actin-binding; it reads IGALVKALSACTPHYIRCIKPNG. The 195-residue stretch at 725-919 folds into the TH1 domain; the sequence is KERRRLSIER…VSTPSDGLPA (195 aa). Residues 958-1017 enclose the SH3 domain; that stretch reads NVKPSAKALYDFDAESSMELSFKEGDILTVLDQSSGDWWDAELKGRRGKVPSNYLQLIKN. The tract at residues 1017 to 1109 is disordered; that stretch reads NAAPPRAGGP…APRGGMAPRV (93 aa). A compositionally biased stretch (low complexity) spans 1030–1043; sequence TGNRAPTTTTTSGG.

Belongs to the TRAFAC class myosin-kinesin ATPase superfamily. Myosin family. Myosin I heavy chain is single-headed. Dimer of a heavy and a light chain. Inability to self-assemble into filaments.

It localises to the cell projection. Its subcellular location is the pseudopodium. The protein localises to the cytoplasm. The protein resides in the cell cortex. In terms of biological role, myosin is a protein that binds to actin and has ATPase activity that is activated by actin. Myosin id may have a role in chemotaxis and aggregation; it could serve to stabilize and even retract cortical structures, such as pseudopods and lamellopods. Involved in the process of phagocytosis. The chain is Myosin ID heavy chain (myoD) from Dictyostelium discoideum (Social amoeba).